The chain runs to 442 residues: Matrix remodeling-associated protein 8 (442 aa).

The N-terminal stretch at 1-19 (MELLSRVLLWKLLLLQSSA) is a signal peptide. Residues 20-340 (VLSSGPSGTA…PEDHTHFFQQ (321 aa)) are Extracellular-facing. Ig-like V-type domains lie at 25–156 (PSGT…LEVT) and 159–291 (PLLS…LQVT). 2 disulfides stabilise this stretch: Cys53/Cys136 and Cys185/Cys271. Asn118 is a glycosylation site (N-linked (GlcNAc...) asparagine). The RGD 1 signature appears at 128–130 (RGD). At Ser227 the chain carries Phosphoserine. The short motif at 251–253 (RGD) is the RGD 2 element. Positions 296 to 319 (EPPARASPGNGSGHSSAPSPDPTL) are disordered. Asn305 is a glycosylation site (N-linked (GlcNAc...) asparagine). The helical transmembrane segment at 341–361 (LGYVLATLLLFILLLITVVLA) threads the bilayer. Over 362-442 (TRYRHSGGCK…DKEFRKEYCK (81 aa)) the chain is Cytoplasmic.

As to quaternary structure, homodimer in cis. Does not appear to form trans-homodimers. Interacts with ITGB3; the interaction inhibits ITGAV:ITGB3 heterodimer formation. In terms of tissue distribution, widely expressed (at protein level). Highly expressed in brain where it localizes to the glia limitans, which is formed by the endfeet of astrocytes surrounding capillaries, and beneath the pia mater (at protein level). In lung, detected in epithelial cells of the bronchus (at protein level). Expressed in intercalated disks in the heart (at protein level). Detected in pancreatic alpha-cells in the islet of Langerhans (at protein level). In kidney, found in the brush border of the proximal convoluted tubule (at protein level). Expressed in the epithelium of the small intestine (at protein level). Weakly expressed in liver (at protein level). Detected in myeloid cells.

The protein localises to the cell membrane. The protein resides in the cell junction. It is found in the tight junction. It localises to the cytoplasm. Its subcellular location is the cell projection. The protein localises to the cilium membrane. The protein resides in the nucleus. Transmembrane protein which can modulate activity of various signaling pathways, probably via binding to integrin ITGAV:ITGB3. Mediates heterophilic cell-cell interactions in vitro. Inhibits osteoclastogenesis downstream of TNFSF11/RANKL and CSF1, where it may function by attenuating signaling via integrin ITGB3 and MAP kinase p38. Plays a role in cartilage formation where it promotes proliferation and maturation of growth plate chondrocytes. Stimulates formation of primary cilia in chondrocytes. Enhances expression of genes involved in the hedgehog signaling pathway in chondrocytes, including the hedgehog signaling molecule IHH; may also promote signaling via the PTHLH/PTHrP pathway. Plays a role in angiogenesis where it suppresses migration of endothelial cells and also promotes their apoptosis. Inhibits VEGF-induced activation of AKT and p38 MAP kinase in endothelial cells. Also inhibits VTN (vitronectin)-mediated integrin ITGAV:ITGB3 signaling and activation of PTK2/FAK. May play a role in the maturation and maintenance of the blood-brain barrier. The chain is Matrix remodeling-associated protein 8 from Mus musculus (Mouse).